The sequence spans 402 residues: 5-methylphenazine-1-carboxylate 1-monooxygenase (402 aa).

Residues isoleucine 14–glycine 15, glutamate 35–serine 36, leucine 43–valine 45, arginine 106, valine 132, arginine 191, and aspartate 310 contribute to the FAD site. Residues arginine 368 to alanine 385 show a composition bias toward basic and acidic residues. Positions arginine 368–arginine 402 are disordered.

Monomer in solution. Probably interacts transiently with PhzM. FAD is required as a cofactor.

The enzyme catalyses 5-methyl-phenazine-1-carboxylate + NADH + O2 + 2 H(+) = pyocyanin + CO2 + NAD(+) + H2O. It participates in secondary metabolite biosynthesis; pyocyanine biosynthesis. In terms of biological role, involved in the biosynthesis of pyocyanine, a blue-pigmented phenazine derivative, which plays a role in virulence. Catalyzes the oxidative decarboxylation of 5-methylphenazine-1-carboxylate (5-methyl-PCA) to pyocyanine. Can also act on phenazine-1-carboxylate (PCA), converting it into 1-hydroxyphenazine (1-HP). However, PCA is a poor substrate. This Pseudomonas aeruginosa (strain ATCC 15692 / DSM 22644 / CIP 104116 / JCM 14847 / LMG 12228 / 1C / PRS 101 / PAO1) protein is 5-methylphenazine-1-carboxylate 1-monooxygenase.